A 267-amino-acid polypeptide reads, in one-letter code: LysM and putative peptidoglycan-binding domain-containing protein 4 (267 aa).

The Extracellular segment spans residues 1 to 211; that stretch reads MRRGDPPPRA…RSNGADWGIQ (211 aa). A disordered region spans residues 30 to 64; the sequence is HRQEEPEASSEDEELNVMELRPRSRDSSSKEKEGV. Residues 35–45 show a composition bias toward acidic residues; the sequence is PEASSEDEELN. A compositionally biased stretch (basic and acidic residues) spans 49–64; it reads LRPRSRDSSSKEKEGV. The region spanning 70 to 114 is the LysM domain; sequence LERDISHEDNLSKLALQYGCKVADIKRVNNLFQEQDMYALKSIKI. Residue asparagine 79 is glycosylated (N-linked (GlcNAc...) asparagine). The disordered stretch occupies residues 130–152; sequence RTPQQRPSHDAAPSNSAMASVSG. Polar residues predominate over residues 142 to 152; the sequence is PSNSAMASVSG. Residues 212–232 form a helical membrane-spanning segment; sequence WWNAVIAMLLIGIVLPIFYVV. The Cytoplasmic segment spans residues 233 to 267; that stretch reads YYKTKDSGESAVDNVGVNISVSTSNSTREYNGKSP.

It is found in the membrane. The sequence is that of LysM and putative peptidoglycan-binding domain-containing protein 4 (lysmd4) from Danio rerio (Zebrafish).